Consider the following 452-residue polypeptide: D-inositol 3-phosphate glycosyltransferase (452 aa).

H25 is a 1D-myo-inositol 3-phosphate binding site. UDP-N-acetyl-alpha-D-glucosamine contacts are provided by residues 31–32 (QP) and G39. 1D-myo-inositol 3-phosphate contacts are provided by residues 36 to 41 (DAGGMN), K94, Y127, T151, and R171. Positions 245, 250, and 309 each coordinate UDP-N-acetyl-alpha-D-glucosamine. Y318, R319, and S321 together coordinate Mg(2+). Residues E331 and E339 each contribute to the UDP-N-acetyl-alpha-D-glucosamine site. T345 contacts Mg(2+).

The protein belongs to the glycosyltransferase group 1 family. MshA subfamily. In terms of assembly, homodimer.

It catalyses the reaction 1D-myo-inositol 3-phosphate + UDP-N-acetyl-alpha-D-glucosamine = 1D-myo-inositol 2-acetamido-2-deoxy-alpha-D-glucopyranoside 3-phosphate + UDP + H(+). In terms of biological role, catalyzes the transfer of a N-acetyl-glucosamine moiety to 1D-myo-inositol 3-phosphate to produce 1D-myo-inositol 2-acetamido-2-deoxy-glucopyranoside 3-phosphate in the mycothiol biosynthesis pathway. The protein is D-inositol 3-phosphate glycosyltransferase of Rhodococcus jostii (strain RHA1).